The sequence spans 126 residues: MARLLLVCLGGALGSGARYLTSAWALRAFGPDFPRGTLLVNVSGSFLLAGIMTASLQSEAVPPDLRLFLAAGVMGGFTTYSSFNYETLALVEQGRLAAAAAYLLATVLGCLAAAFAATLLVRWLAG.

Transmembrane regions (helical) follow at residues 4–24 (LLLV…TSAW), 36–56 (GTLL…TASL), 67–85 (LFLA…SFNY), and 101–121 (AYLL…TLLV). G75 and T78 together coordinate Na(+).

Belongs to the fluoride channel Fluc/FEX (TC 1.A.43) family.

Its subcellular location is the cell inner membrane. The enzyme catalyses fluoride(in) = fluoride(out). Its activity is regulated as follows. Na(+) is not transported, but it plays an essential structural role and its presence is essential for fluoride channel function. In terms of biological role, fluoride-specific ion channel. Important for reducing fluoride concentration in the cell, thus reducing its toxicity. The polypeptide is Fluoride-specific ion channel FluC (Anaeromyxobacter dehalogenans (strain 2CP-1 / ATCC BAA-258)).